The sequence spans 29 residues: Potassium channel toxin alpha-KTx 3.15 (29 aa).

Cys-8 and Cys-27 form a disulfide bridge.

Belongs to the short scorpion toxin superfamily. Potassium channel inhibitor family. Alpha-KTx 03 subfamily. Expressed by the venom gland.

Its subcellular location is the secreted. May play a role in blocking voltage-gated potassium channels Kv1.1/KCNA1, Kv1.3/KCNA3 and Kv1.6/KCNA6. In Mesobuthus gibbosus (Mediterranean checkered scorpion), this protein is Potassium channel toxin alpha-KTx 3.15.